Consider the following 275-residue polypeptide: Large ribosomal subunit protein uL2 (275 aa).

Positions 212-259 (RWKGIRPTNRGVTMNPVDHPHGGGEGKTSGGRHPVTPWGQPTRGYKTR) are disordered.

Belongs to the universal ribosomal protein uL2 family. Part of the 50S ribosomal subunit. Forms a bridge to the 30S subunit in the 70S ribosome.

Its function is as follows. One of the primary rRNA binding proteins. Required for association of the 30S and 50S subunits to form the 70S ribosome, for tRNA binding and peptide bond formation. It has been suggested to have peptidyltransferase activity; this is somewhat controversial. Makes several contacts with the 16S rRNA in the 70S ribosome. This is Large ribosomal subunit protein uL2 from Acidobacterium capsulatum (strain ATCC 51196 / DSM 11244 / BCRC 80197 / JCM 7670 / NBRC 15755 / NCIMB 13165 / 161).